The chain runs to 611 residues: uncharacterized protein (611 aa).

It belongs to the metallo-dependent hydrolases superfamily. N-acyl-D-amino-acid deacylase family.

This is an uncharacterized protein from Mycobacterium bovis (strain ATCC BAA-935 / AF2122/97).